The following is a 268-amino-acid chain: Phosphatidylglycerol--prolipoprotein diacylglyceryl transferase (268 aa).

3 helical membrane passes run 25 to 45 (WYGV…TKVF), 57 to 77 (YLFY…HCFF), and 93 to 113 (VWHG…AVYF). A 1,2-diacyl-sn-glycero-3-phospho-(1'-sn-glycerol) is bound at residue R142. The next 4 helical transmembrane spans lie at 151–171 (IIGI…DLLP), 175–195 (VQLY…LAYW), 204–224 (GLLL…LEFF), and 236–256 (PLSV…LLIF).

Belongs to the Lgt family.

The protein localises to the cell inner membrane. The enzyme catalyses L-cysteinyl-[prolipoprotein] + a 1,2-diacyl-sn-glycero-3-phospho-(1'-sn-glycerol) = an S-1,2-diacyl-sn-glyceryl-L-cysteinyl-[prolipoprotein] + sn-glycerol 1-phosphate + H(+). It functions in the pathway protein modification; lipoprotein biosynthesis (diacylglyceryl transfer). In terms of biological role, catalyzes the transfer of the diacylglyceryl group from phosphatidylglycerol to the sulfhydryl group of the N-terminal cysteine of a prolipoprotein, the first step in the formation of mature lipoproteins. This chain is Phosphatidylglycerol--prolipoprotein diacylglyceryl transferase, found in Chloroherpeton thalassium (strain ATCC 35110 / GB-78).